Reading from the N-terminus, the 199-residue chain is Pneumococcal vaccine antigen A homolog (199 aa).

It is found in the cell surface. The polypeptide is Pneumococcal vaccine antigen A homolog (pvaA) (Streptococcus pyogenes serotype M3 (strain ATCC BAA-595 / MGAS315)).